A 232-amino-acid polypeptide reads, in one-letter code: MDSSDSSCQEWCSHGQYWLELGPTDLMERKGSLTLRSHHKKYSKPVLVYSWHRDRETYPKDYDIEGPEEVKKLCNSTYRRLGTSEPPVWISETREKMAQVCLNTKLAKIKSKALLNEETMNSGIIERDTGLPATGFGALFTRHSPDWSKMCTLTTYAEEYAPPYEYQPLGDPCQDDDYSIVHRKCRSQFTDLDGSKRVGINTWHDESGIYANSYVKRKLYSLTGGPIAPFLK.

Topologically, residues methionine 1–lysine 96 are extracellular. N-linked (GlcNAc...) asparagine glycosylation is present at asparagine 75. Residues methionine 97 to leucine 115 traverse the membrane as a helical segment. Residues asparagine 116–lysine 232 are Cytoplasmic-facing. Residues leucine 153–proline 163 are mn.

In terms of assembly, microtubule inner protein component of sperm flagellar doublet microtubules. Interacts with MYH9. Interacts with MYH10. As to expression, expressed in trachea multiciliated cells.

It is found in the cytoplasm. The protein resides in the cytoskeleton. Its subcellular location is the cilium axoneme. The protein localises to the flagellum axoneme. It localises to the cell membrane. Microtubule inner protein (MIP) part of the dynein-decorated doublet microtubules (DMTs) in cilia axoneme, which is required for motile cilia beating. The sequence is that of Cilia- and flagella-associated protein 95 from Bos taurus (Bovine).